The following is a 424-amino-acid chain: COUP transcription factor 1 (424 aa).

The tract at residues 1–82 (MAMVVSSWRD…QGPPGSGQSQ (82 aa)) is disordered. A compositionally biased stretch (low complexity) spans 39-68 (EQQQQQAGSGAPHTPQTPGQPGAPATPGTA). Positions 84 to 159 (HIECVVCGDK…VGMRREAVQR (76 aa)) form a DNA-binding region, nuclear receptor. NR C4-type zinc fingers lie at residues 87-107 (CVVC…CEGC) and 123-147 (CRAN…LKKC). One can recognise an NR LBD domain in the interval 185 to 411 (YLSGYISLLL…TLIRDMLLSG (227 aa)).

Belongs to the nuclear hormone receptor family. NR2 subfamily. Binds DNA as dimer; homodimer and probable heterodimer with NR2F6. Interacts with GTF2B; this interaction is direct. Interacts with COPS2.

The protein resides in the nucleus. In terms of biological role, coup (chicken ovalbumin upstream promoter) transcription factor binds to the ovalbumin promoter and, in conjunction with another protein (S300-II) stimulates initiation of transcription. Binds to both direct repeats and palindromes of the 5'-AGGTCA-3' motif. Represses transcriptional activity of LHCG. The protein is COUP transcription factor 1 (NR2F1) of Bos taurus (Bovine).